Here is a 515-residue protein sequence, read N- to C-terminus: MSILKCLGVRGNQLCAARNYLKVLGFSSFHTAPNSSIEIQTQDEEVVIALGSNVGDRLHNFKEALKLMRKSGIHITRHASLYETAPAYVTDQPRFLNSAVRADTKLGPHELLAALKRIEKDMGRTDGIRYGPRPIDLDILFYGKFKVRSDILTVPHERIWERPFVMAPLMDLLGTAIDSDTVASWHSFSGHSGGLNALWEKLGGESLIGEEGMYRVMPVANGLLDWSRRTLVMGILNLTPDSFSDGGNFQSVKSAVSQARLMISEGADIIDIGAQSTRPMASRISAEEELGRLIPVLEAVMSIPEVEGKLISVDTFYSEVALEAVRKGAHIINDVSAGKLDASMFKVMAELDVPYVAMHMRGDPSTMQDSENLKYDNVCKDISSELYSRVREAEISGIPAWRIIMDPGIGFSKKTEDNLAALTGIPDIREEISKRSLAISHAPILIGPSRKRFLGEICSRPSAVDRDPATIASVTAGVLCGANIVRVHNVKDNLDAVKLCDAILKQKSSPIKFKQ.

Residues 1 to 28 (MSILKCLGVRGNQLCAARNYLKVLGFSS) constitute a mitochondrion transit peptide. The tract at residues 47–172 (VIALGSNVGD…PFVMAPLMDL (126 aa)) is HPPK. The Pterin-binding domain occupies 230-498 (TLVMGILNLT…NVKDNLDAVK (269 aa)). Positions 232 to 515 (VMGILNLTPD…QKSSPIKFKQ (284 aa)) are DHPS. Asparagine 237 provides a ligand contact to Mg(2+). Residues threonine 277, aspartate 314, asparagine 333, aspartate 406, lysine 451, and 486–488 (RVH) contribute to the (7,8-dihydropterin-6-yl)methyl diphosphate site.

This sequence in the N-terminal section; belongs to the HPPK family. In the C-terminal section; belongs to the DHPS family. As to quaternary structure, homomultimer. The cofactor is Mg(2+).

Its subcellular location is the mitochondrion. The catalysed reaction is 6-hydroxymethyl-7,8-dihydropterin + ATP = (7,8-dihydropterin-6-yl)methyl diphosphate + AMP + H(+). It carries out the reaction (7,8-dihydropterin-6-yl)methyl diphosphate + 4-aminobenzoate = 7,8-dihydropteroate + diphosphate. It functions in the pathway cofactor biosynthesis; tetrahydrofolate biosynthesis; 2-amino-4-hydroxy-6-hydroxymethyl-7,8-dihydropteridine diphosphate from 7,8-dihydroneopterin triphosphate: step 4/4. It participates in cofactor biosynthesis; tetrahydrofolate biosynthesis; 7,8-dihydrofolate from 2-amino-4-hydroxy-6-hydroxymethyl-7,8-dihydropteridine diphosphate and 4-aminobenzoate: step 1/2. Its function is as follows. Catalyzes the first two consecutive steps of tetrahydrofolate biosynthesis. This Pisum sativum (Garden pea) protein is Folate synthesis bifunctional protein, mitochondrial.